The sequence spans 77 residues: Small ribosomal subunit protein uS17 (77 aa).

This sequence belongs to the universal ribosomal protein uS17 family. As to quaternary structure, part of the 30S ribosomal subunit.

One of the primary rRNA binding proteins, it binds specifically to the 5'-end of 16S ribosomal RNA. The chain is Small ribosomal subunit protein uS17 from Rickettsia prowazekii (strain Madrid E).